Here is a 389-residue protein sequence, read N- to C-terminus: Large envelope protein (389 aa).

Met1 carries the N-acetylmethionine modification. Residue Gly2 is the site of N-myristoyl glycine; by host attachment. The tract at residues 2-108 is pre-S1; that stretch reads GQNLSTSNPL…PPLRDTHPQA (107 aa). Residues 2 to 163 form a pre-S region; the sequence is GQNLSTSNPL…FSRTGDPAPN (162 aa). Over 2–170 the chain is Virion surface; in external conformation; it reads GQNLSTSNPL…APNMESITSG (169 aa). The Intravirion; in internal conformation segment spans residues 2 to 242; that stretch reads GQNLSTSNPL…PGYRWMCLRR (241 aa). Positions 73-99 are disordered; sequence IITTVPANPPPASTNRQSGRKPTPISP. The interval 109 to 163 is pre-S2; sequence MHWNSTTFHQALQDPRVRGLYFPAGGSSSGTAYPVPDTASHISSIFSRTGDPAPN. A helical membrane pass occupies residues 171-191; the sequence is FLGPLLVLQAGFFLLTKILTI. The Intravirion; in external conformation portion of the chain corresponds to 192 to 242; it reads PQSLDSWWTSLNFLGGAPVCLGQNSQSPTSNHSPTSCPPICPGYRWMCLRR. The helical transmembrane segment at 243-263 threads the bilayer; sequence FIIFLFILLLCLIFLLVLLDY. Topologically, residues 264-337 are virion surface; it reads QGMLPVCPLI…WASVRFSWLS (74 aa). Asn309 carries N-linked (GlcNAc...) asparagine; by host glycosylation. A helical transmembrane segment spans residues 338–358; that stretch reads LLAPFVQWFAGLSPTVWLSVI. The Intravirion portion of the chain corresponds to 359-364; the sequence is WMMWYW. A helical transmembrane segment spans residues 365–387; the sequence is GPNLYNILSPFIPLLPIFFCLWV. At 388–389 the chain is on the virion surface side; that stretch reads YI.

The protein belongs to the orthohepadnavirus major surface antigen family. In its internal form (Li-HBsAg), interacts with the capsid protein and with the isoform S. Interacts with host chaperone CANX. As to quaternary structure, associates with host chaperone CANX through its pre-S2 N glycan; this association may be essential for isoform M proper secretion. In terms of assembly, interacts with isoform L. Interacts with the antigens of satellite virus HDV (HDVAgs); this interaction is required for encapsidation of HDV genomic RNA. In terms of processing, isoform M is N-terminally acetylated by host at a ratio of 90%, and N-glycosylated by host at the pre-S2 region. Myristoylated.

It is found in the virion membrane. Functionally, the large envelope protein exists in two topological conformations, one which is termed 'external' or Le-HBsAg and the other 'internal' or Li-HBsAg. In its external conformation the protein attaches the virus to cell receptors and thereby initiating infection. This interaction determines the species specificity and liver tropism. This attachment induces virion internalization predominantly through caveolin-mediated endocytosis. The large envelope protein also assures fusion between virion membrane and endosomal membrane. In its internal conformation the protein plays a role in virion morphogenesis and mediates the contact with the nucleocapsid like a matrix protein. In terms of biological role, the middle envelope protein plays an important role in the budding of the virion. It is involved in the induction of budding in a nucleocapsid independent way. In this process the majority of envelope proteins bud to form subviral lipoprotein particles of 22 nm of diameter that do not contain a nucleocapsid. The sequence is that of Large envelope protein from Gorilla gorilla (western gorilla).